A 269-amino-acid chain; its full sequence is Interleukin-1 beta (269 aa).

The propeptide occupies methionine 1 to aspartate 116.

The protein belongs to the IL-1 family. In terms of assembly, monomer. In its precursor form, weakly interacts with full-length MEFV; the mature cytokine does not interact at all. Interacts with integrins ITGAV:ITGBV and ITGA5:ITGB1; integrin-binding is required for IL1B signaling. Interacts with cargo receptor TMED10; the interaction is direct and is required for the secretion of IL1B mature form. Interacts with HSP90AB1; the interaction facilitates cargo translocation into the ERGIC. Interacts with HSP90B1; the interaction facilitates cargo translocation into the ERGIC.

Its subcellular location is the cytoplasm. It is found in the cytosol. The protein resides in the secreted. The protein localises to the lysosome. It localises to the extracellular exosome. Its function is as follows. Potent pro-inflammatory cytokine. Initially discovered as the major endogenous pyrogen, induces prostaglandin synthesis, neutrophil influx and activation, T-cell activation and cytokine production, B-cell activation and antibody production, and fibroblast proliferation and collagen production. Promotes Th17 differentiation of T-cells. Synergizes with IL12/interleukin-12 to induce IFNG synthesis from T-helper 1 (Th1) cells. Plays a role in angiogenesis by inducing VEGF production synergistically with TNF and IL6. Involved in transduction of inflammation downstream of pyroptosis: its mature form is specifically released in the extracellular milieu by passing through the gasdermin-D (GSDMD) pore. The chain is Interleukin-1 beta (IL1B) from Macaca mulatta (Rhesus macaque).